The following is a 76-amino-acid chain: Mating-type pheromone BBP1(1) (76 aa).

Position 73 is a cysteine methyl ester (Cys73). The S-farnesyl cysteine moiety is linked to residue Cys73. Residues 74 to 76 (VVA) constitute a propeptide, removed in mature form.

It is found in the cell membrane. Functionally, activates B-regulated development. The chain is Mating-type pheromone BBP1(1) (BBP1(1)) from Schizophyllum commune (Split gill fungus).